We begin with the raw amino-acid sequence, 86 residues long: Cell division topological specificity factor (86 aa).

The protein belongs to the MinE family.

Functionally, prevents the cell division inhibition by proteins MinC and MinD at internal division sites while permitting inhibition at polar sites. This ensures cell division at the proper site by restricting the formation of a division septum at the midpoint of the long axis of the cell. The sequence is that of Cell division topological specificity factor from Shewanella piezotolerans (strain WP3 / JCM 13877).